The sequence spans 167 residues: Small ribosomal subunit protein uS5 (167 aa).

Residues 11–74 (LQEKLIAVNR…DKARRNMTTI (64 aa)) enclose the S5 DRBM domain.

The protein belongs to the universal ribosomal protein uS5 family. Part of the 30S ribosomal subunit. Contacts proteins S4 and S8.

Functionally, with S4 and S12 plays an important role in translational accuracy. Located at the back of the 30S subunit body where it stabilizes the conformation of the head with respect to the body. This chain is Small ribosomal subunit protein uS5, found in Baumannia cicadellinicola subsp. Homalodisca coagulata.